We begin with the raw amino-acid sequence, 141 residues long: Hemoglobin subunit alpha (141 aa).

One can recognise a Globin domain in the interval 1–141; it reads VLSPGDKSNI…VSTVLTSKYR (141 aa). Serine 3 bears the Phosphoserine mark. Lysine 7 and lysine 11 each carry N6-succinyllysine. The residue at position 16 (lysine 16) is an N6-acetyllysine; alternate. Lysine 16 carries the N6-succinyllysine; alternate modification. Phosphotyrosine is present on tyrosine 24. Serine 35 is modified (phosphoserine). The residue at position 40 (lysine 40) is an N6-succinyllysine. A Phosphoserine modification is found at serine 49. Histidine 58 contacts O2. A heme b-binding site is contributed by histidine 87. Serine 102 carries the phosphoserine modification. Threonine 108 carries the phosphothreonine modification. A Phosphoserine modification is found at serine 124. Threonine 134 and threonine 137 each carry phosphothreonine. Serine 138 bears the Phosphoserine mark.

The protein belongs to the globin family. As to quaternary structure, heterotetramer of two alpha chains and two beta chains. In terms of tissue distribution, red blood cells.

Involved in oxygen transport from the lung to the various peripheral tissues. Functionally, hemopressin acts as an antagonist peptide of the cannabinoid receptor CNR1. Hemopressin-binding efficiently blocks cannabinoid receptor CNR1 and subsequent signaling. The polypeptide is Hemoglobin subunit alpha (HBA) (Tupaia glis (Common tree shrew)).